Reading from the N-terminus, the 426-residue chain is MLDSKLLRGQLQEVADRLASRGFSLDVARIESLEERRKAVQTRTEQLQAERNARSKSIGQAKAKGEDIAPLMADVERMANELAAGKAELDAIQAELDSILLTIPNLPDASVPVGASEDDNVEVRRWGTPKAFDFEIKDHVALGEISRGLDFEAAAKLSGARFAVLRGPVARLHRALAQFMINLHTGEHGYEEHYTPYMVQAPALQGTGQLPKFEEDLFKITREGEADFYLIPTAEVSLTNLVAGEILDAKQLPLKLVAHTPCFRSEAGASGRDTRGMIRQHQFDKVEMVQVVEPSKSMEALEGLTANAERVLQLLELPYRVLALCTGDMGFGAVKTYDLEVWVPSQDKYREISSCSNCGDFQARRMQARWRNPETGKPELVHTLNGSGLAVGRTLVAVLENYQQADGSILVPEVLKPYMGGVEVIR.

233–235 (TAE) provides a ligand contact to L-serine. 264-266 (RSE) is a binding site for ATP. Glutamate 287 contributes to the L-serine binding site. 351–354 (EISS) contributes to the ATP binding site. Serine 387 serves as a coordination point for L-serine.

The protein belongs to the class-II aminoacyl-tRNA synthetase family. Type-1 seryl-tRNA synthetase subfamily. As to quaternary structure, homodimer. The tRNA molecule binds across the dimer.

It is found in the cytoplasm. The enzyme catalyses tRNA(Ser) + L-serine + ATP = L-seryl-tRNA(Ser) + AMP + diphosphate + H(+). It catalyses the reaction tRNA(Sec) + L-serine + ATP = L-seryl-tRNA(Sec) + AMP + diphosphate + H(+). Its pathway is aminoacyl-tRNA biosynthesis; selenocysteinyl-tRNA(Sec) biosynthesis; L-seryl-tRNA(Sec) from L-serine and tRNA(Sec): step 1/1. Its function is as follows. Catalyzes the attachment of serine to tRNA(Ser). Is also able to aminoacylate tRNA(Sec) with serine, to form the misacylated tRNA L-seryl-tRNA(Sec), which will be further converted into selenocysteinyl-tRNA(Sec). The protein is Serine--tRNA ligase of Pseudomonas putida (strain ATCC 700007 / DSM 6899 / JCM 31910 / BCRC 17059 / LMG 24140 / F1).